The chain runs to 627 residues: Phosphomethylpyrimidine synthase (627 aa).

Residues Asn-233, Met-262, Tyr-291, His-327, 347 to 349 (SRG), 388 to 391 (DGLR), and Glu-427 contribute to the substrate site. His-431 lines the Zn(2+) pocket. Substrate is bound at residue Tyr-454. His-495 serves as a coordination point for Zn(2+). Positions 575, 578, and 583 each coordinate [4Fe-4S] cluster.

The protein belongs to the ThiC family. In terms of assembly, homodimer. Requires [4Fe-4S] cluster as cofactor.

The catalysed reaction is 5-amino-1-(5-phospho-beta-D-ribosyl)imidazole + S-adenosyl-L-methionine = 4-amino-2-methyl-5-(phosphooxymethyl)pyrimidine + CO + 5'-deoxyadenosine + formate + L-methionine + 3 H(+). Its pathway is cofactor biosynthesis; thiamine diphosphate biosynthesis. Its function is as follows. Catalyzes the synthesis of the hydroxymethylpyrimidine phosphate (HMP-P) moiety of thiamine from aminoimidazole ribotide (AIR) in a radical S-adenosyl-L-methionine (SAM)-dependent reaction. This Acidithiobacillus ferrooxidans (strain ATCC 23270 / DSM 14882 / CIP 104768 / NCIMB 8455) (Ferrobacillus ferrooxidans (strain ATCC 23270)) protein is Phosphomethylpyrimidine synthase.